Here is a 361-residue protein sequence, read N- to C-terminus: Probable pectinesterase 50 (361 aa).

A signal peptide spans 1–22 (MGYISMSVVAFLVVFASPVVLA). Position 174 (glutamine 174) interacts with substrate. Residue aspartate 197 is the Proton donor of the active site. The active-site Nucleophile is the aspartate 218. Substrate-binding residues include arginine 275 and tryptophan 277.

Belongs to the pectinesterase family. In terms of tissue distribution, expressed in flower buds.

It localises to the secreted. Its subcellular location is the cell wall. It catalyses the reaction [(1-&gt;4)-alpha-D-galacturonosyl methyl ester](n) + n H2O = [(1-&gt;4)-alpha-D-galacturonosyl](n) + n methanol + n H(+). The protein operates within glycan metabolism; pectin degradation; 2-dehydro-3-deoxy-D-gluconate from pectin: step 1/5. Its function is as follows. Acts in the modification of cell walls via demethylesterification of cell wall pectin. In Arabidopsis thaliana (Mouse-ear cress), this protein is Probable pectinesterase 50 (PME50).